The primary structure comprises 90 residues: Neurotoxin LmNaTx19 (90 aa).

Positions 1-19 are cleaved as a signal peptide; it reads MNHLILIVAMCLMVIGVQC. Residues 21 to 80 enclose the LCN-type CS-alpha/beta domain; it reads KDGYLYDDVDCKFSCWDNEYCRKLCKSKKAVGGYCWRWRFSCYCTGLPDNEKTEGTYKCG. 4 disulfide bridges follow: cysteine 31–cysteine 79, cysteine 35–cysteine 55, cysteine 41–cysteine 62, and cysteine 45–cysteine 64.

It belongs to the long (4 C-C) scorpion toxin superfamily. Sodium channel inhibitor family. Alpha subfamily. As to expression, expressed by the venom gland.

It is found in the secreted. Its function is as follows. Binds voltage-independently at site-3 of voltage-gated sodium channels (Nav) and inhibits the inactivation of the activated channels, thereby blocking neuronal transmission. This chain is Neurotoxin LmNaTx19, found in Lychas mucronatus (Chinese swimming scorpion).